We begin with the raw amino-acid sequence, 188 residues long: Elongation factor P (188 aa).

The protein belongs to the elongation factor P family.

The protein resides in the cytoplasm. Its pathway is protein biosynthesis; polypeptide chain elongation. In terms of biological role, involved in peptide bond synthesis. Stimulates efficient translation and peptide-bond synthesis on native or reconstituted 70S ribosomes in vitro. Probably functions indirectly by altering the affinity of the ribosome for aminoacyl-tRNA, thus increasing their reactivity as acceptors for peptidyl transferase. This chain is Elongation factor P, found in Rickettsia bellii (strain OSU 85-389).